Reading from the N-terminus, the 686-residue chain is tRNA 5-methylaminomethyl-2-thiouridine biosynthesis bifunctional protein MnmC (686 aa).

The tract at residues 1 to 258 (MPNIPLRVNS…RRALRRQQLD (258 aa)) is tRNA (mnm(5)s(2)U34)-methyltransferase. An FAD-dependent cmnm(5)s(2)U34 oxidoreductase region spans residues 276–686 (IGGGVASANL…MRKLIKGKAL (411 aa)).

This sequence in the N-terminal section; belongs to the methyltransferase superfamily. tRNA (mnm(5)s(2)U34)-methyltransferase family. The protein in the C-terminal section; belongs to the DAO family. FAD serves as cofactor.

It is found in the cytoplasm. It catalyses the reaction 5-aminomethyl-2-thiouridine(34) in tRNA + S-adenosyl-L-methionine = 5-methylaminomethyl-2-thiouridine(34) in tRNA + S-adenosyl-L-homocysteine + H(+). Its function is as follows. Catalyzes the last two steps in the biosynthesis of 5-methylaminomethyl-2-thiouridine (mnm(5)s(2)U) at the wobble position (U34) in tRNA. Catalyzes the FAD-dependent demodification of cmnm(5)s(2)U34 to nm(5)s(2)U34, followed by the transfer of a methyl group from S-adenosyl-L-methionine to nm(5)s(2)U34, to form mnm(5)s(2)U34. In Shewanella loihica (strain ATCC BAA-1088 / PV-4), this protein is tRNA 5-methylaminomethyl-2-thiouridine biosynthesis bifunctional protein MnmC.